We begin with the raw amino-acid sequence, 431 residues long: D-tagatose-1,6-bisphosphate aldolase subunit KbaZ (431 aa).

This sequence belongs to the GatZ/KbaZ family. KbaZ subfamily. In terms of assembly, forms a complex with KbaY.

The protein operates within carbohydrate metabolism; D-tagatose 6-phosphate degradation; D-glyceraldehyde 3-phosphate and glycerone phosphate from D-tagatose 6-phosphate: step 2/2. Its function is as follows. Component of the tagatose-1,6-bisphosphate aldolase KbaYZ that is required for full activity and stability of the Y subunit. Could have a chaperone-like function for the proper and stable folding of KbaY. When expressed alone, KbaZ does not show any aldolase activity. This Citrobacter koseri (strain ATCC BAA-895 / CDC 4225-83 / SGSC4696) protein is D-tagatose-1,6-bisphosphate aldolase subunit KbaZ.